The primary structure comprises 280 residues: Large ribosomal subunit protein uL2 (280 aa).

Disordered stretches follow at residues 1–59 (MAIR…GGHK) and 223–280 (GVVM…NKKR). Basic residues-rich tracts occupy residues 45–59 (VHGHITTRHKGGGHK) and 269–280 (VRRRRSNKNKKR).

The protein belongs to the universal ribosomal protein uL2 family. In terms of assembly, part of the 50S ribosomal subunit. Forms a bridge to the 30S subunit in the 70S ribosome.

Its function is as follows. One of the primary rRNA binding proteins. Required for association of the 30S and 50S subunits to form the 70S ribosome, for tRNA binding and peptide bond formation. It has been suggested to have peptidyltransferase activity; this is somewhat controversial. Makes several contacts with the 16S rRNA in the 70S ribosome. This is Large ribosomal subunit protein uL2 from Corynebacterium jeikeium (strain K411).